Consider the following 87-residue polypeptide: Putative protein KleG (87 aa).

Disordered stretches follow at residues 1-23 and 61-87; these read MRHS…WPSS and IPTT…IFSR. A compositionally biased stretch (basic residues) spans 68–78; the sequence is RGRRPQRHRPS.

This is Putative protein KleG (kleG) from Escherichia coli.